A 326-amino-acid chain; its full sequence is Vitamin B12 import system permease protein BtuC (326 aa).

Helical transmembrane passes span 13 to 35 (IRWL…CAGE), 55 to 77 (IRLP…GAVM), 90 to 107 (LLGV…AVLL), 111 to 133 (QLPN…LILL), 146 to 168 (LLAG…YFST), 188 to 205 (WRQS…LWIC), 242 to 264 (MVGV…PHIL), 274 to 296 (VLLP…VARL), and 303 to 322 (LPIG…WLLL).

This sequence belongs to the binding-protein-dependent transport system permease family. FecCD subfamily. The complex is composed of two ATP-binding proteins (BtuD), two transmembrane proteins (BtuC) and a solute-binding protein (BtuF).

It is found in the cell inner membrane. Part of the ABC transporter complex BtuCDF involved in vitamin B12 import. Involved in the translocation of the substrate across the membrane. In Shigella flexneri, this protein is Vitamin B12 import system permease protein BtuC.